The sequence spans 306 residues: Acetyl-coenzyme A carboxylase carboxyl transferase subunit beta (306 aa).

A CoA carboxyltransferase N-terminal domain is found at 27–296; that stretch reads LWHKCPSCEA…PRFVAPVIEP (270 aa). Positions 31, 34, 50, and 53 each coordinate Zn(2+). A C4-type zinc finger spans residues 31 to 53; that stretch reads CPSCEAVLYRPELEKTLDVCPKC.

It belongs to the AccD/PCCB family. Acetyl-CoA carboxylase is a heterohexamer composed of biotin carboxyl carrier protein (AccB), biotin carboxylase (AccC) and two subunits each of ACCase subunit alpha (AccA) and ACCase subunit beta (AccD). Zn(2+) serves as cofactor.

It is found in the cytoplasm. It catalyses the reaction N(6)-carboxybiotinyl-L-lysyl-[protein] + acetyl-CoA = N(6)-biotinyl-L-lysyl-[protein] + malonyl-CoA. It participates in lipid metabolism; malonyl-CoA biosynthesis; malonyl-CoA from acetyl-CoA: step 1/1. Functionally, component of the acetyl coenzyme A carboxylase (ACC) complex. Biotin carboxylase (BC) catalyzes the carboxylation of biotin on its carrier protein (BCCP) and then the CO(2) group is transferred by the transcarboxylase to acetyl-CoA to form malonyl-CoA. The protein is Acetyl-coenzyme A carboxylase carboxyl transferase subunit beta of Pseudomonas syringae pv. syringae (strain B728a).